A 293-amino-acid polypeptide reads, in one-letter code: MTITASMVKELRERTGAGMMECKKALAETNGDMEAAIELMRKSGAAKADKKAGRIAAEGQVVVALSDDATRAAMVEVNCETDFVAKDENFEKFANRVAEVVLSGAPADVSALMAQNMDGASVEETRAALIAKVGENVQVRRFERLEAAAGGTLGFYRHGNRIGVAVELEGGDAELAKDICMHIAASRPVCVDETQVPQELLDKEREIFAAQAAESGKPAEIIEKMVSGRIKKYLAEITLVGQPFVKDPDKTVGKLLEGAGAKVRRFVRYEVGEGIEKKTENFAEEVMAQAKGA.

Residues 81-84 (TDFV) are involved in Mg(2+) ion dislocation from EF-Tu.

It belongs to the EF-Ts family.

The protein localises to the cytoplasm. Associates with the EF-Tu.GDP complex and induces the exchange of GDP to GTP. It remains bound to the aminoacyl-tRNA.EF-Tu.GTP complex up to the GTP hydrolysis stage on the ribosome. This is Elongation factor Ts from Thioalkalivibrio sulfidiphilus (strain HL-EbGR7).